A 156-amino-acid chain; its full sequence is RING finger protein 224 (156 aa).

Residues cysteine 23–arginine 70 form an RING-type zinc finger.

This chain is RING finger protein 224 (Rnf224), found in Mus musculus (Mouse).